We begin with the raw amino-acid sequence, 1863 residues long: E3 ubiquitin-protein ligase ubr3 (1863 aa).

The UBR-type zinc finger occupies 80-151; the sequence is TLCGLVWTAN…ESGFCNRHRL (72 aa). Disordered regions lie at residues 302 to 330, 970 to 995, and 1128 to 1152; these read LDDS…SSTK, PEVE…SATF, and IPPK…RARE. Basic and acidic residues-rich tracts occupy residues 971–984 and 1134–1152; these read EVER…ERET and SPGD…RARE. The RING-type; degenerate zinc finger occupies 1270–1328; sequence DSSCLQSVSIGWDGGVYVQTCGHTLHIDCHKSYMESLRNDQVLQGISVDKGEFTCPLCR.

This sequence belongs to the E3 ubiquitin-protein ligase UBR1-like family.

The enzyme catalyses S-ubiquitinyl-[E2 ubiquitin-conjugating enzyme]-L-cysteine + [acceptor protein]-L-lysine = [E2 ubiquitin-conjugating enzyme]-L-cysteine + N(6)-ubiquitinyl-[acceptor protein]-L-lysine.. The protein operates within protein modification; protein ubiquitination. Its function is as follows. E3 ubiquitin-protein ligase which is a component of the N-end rule pathway. Recognizes and binds to proteins bearing specific N-terminal residues, leading to their ubiquitination and subsequent degradation. Positively regulates hedgehog/shh-signaling pathways that function in eye development, neuronal specification and somite development. Activation of shh up-regulates transcription of ubr3, which in turn promotes hedgehog/shh signaling possibly by controlling negative regulators such as Kif7. The protein is E3 ubiquitin-protein ligase ubr3 of Danio rerio (Zebrafish).